The following is a 236-amino-acid chain: 2-C-methyl-D-erythritol 4-phosphate cytidylyltransferase (236 aa).

Belongs to the IspD/TarI cytidylyltransferase family. IspD subfamily.

It catalyses the reaction 2-C-methyl-D-erythritol 4-phosphate + CTP + H(+) = 4-CDP-2-C-methyl-D-erythritol + diphosphate. It functions in the pathway isoprenoid biosynthesis; isopentenyl diphosphate biosynthesis via DXP pathway; isopentenyl diphosphate from 1-deoxy-D-xylulose 5-phosphate: step 2/6. Catalyzes the formation of 4-diphosphocytidyl-2-C-methyl-D-erythritol from CTP and 2-C-methyl-D-erythritol 4-phosphate (MEP). In Burkholderia pseudomallei (strain 1106a), this protein is 2-C-methyl-D-erythritol 4-phosphate cytidylyltransferase.